The sequence spans 118 residues: Large ribosomal subunit protein bL19 (118 aa).

The protein belongs to the bacterial ribosomal protein bL19 family.

This protein is located at the 30S-50S ribosomal subunit interface and may play a role in the structure and function of the aminoacyl-tRNA binding site. The chain is Large ribosomal subunit protein bL19 from Lactiplantibacillus plantarum (strain ATCC BAA-793 / NCIMB 8826 / WCFS1) (Lactobacillus plantarum).